The chain runs to 476 residues: Aspartyl/glutamyl-tRNA(Asn/Gln) amidotransferase subunit B (476 aa).

Belongs to the GatB/GatE family. GatB subfamily. Heterotrimer of A, B and C subunits.

The enzyme catalyses L-glutamyl-tRNA(Gln) + L-glutamine + ATP + H2O = L-glutaminyl-tRNA(Gln) + L-glutamate + ADP + phosphate + H(+). It carries out the reaction L-aspartyl-tRNA(Asn) + L-glutamine + ATP + H2O = L-asparaginyl-tRNA(Asn) + L-glutamate + ADP + phosphate + 2 H(+). Functionally, allows the formation of correctly charged Asn-tRNA(Asn) or Gln-tRNA(Gln) through the transamidation of misacylated Asp-tRNA(Asn) or Glu-tRNA(Gln) in organisms which lack either or both of asparaginyl-tRNA or glutaminyl-tRNA synthetases. The reaction takes place in the presence of glutamine and ATP through an activated phospho-Asp-tRNA(Asn) or phospho-Glu-tRNA(Gln). This is Aspartyl/glutamyl-tRNA(Asn/Gln) amidotransferase subunit B from Lactobacillus acidophilus (strain ATCC 700396 / NCK56 / N2 / NCFM).